The following is a 366-amino-acid chain: Cobalt-precorrin-5B C(1)-methyltransferase (366 aa).

It belongs to the CbiD family.

It carries out the reaction Co-precorrin-5B + S-adenosyl-L-methionine = Co-precorrin-6A + S-adenosyl-L-homocysteine. Its pathway is cofactor biosynthesis; adenosylcobalamin biosynthesis; cob(II)yrinate a,c-diamide from sirohydrochlorin (anaerobic route): step 6/10. Catalyzes the methylation of C-1 in cobalt-precorrin-5B to form cobalt-precorrin-6A. In Paraburkholderia phymatum (strain DSM 17167 / CIP 108236 / LMG 21445 / STM815) (Burkholderia phymatum), this protein is Cobalt-precorrin-5B C(1)-methyltransferase.